The primary structure comprises 670 residues: Carnitine O-acetyltransferase, mitochondrial (670 aa).

Catalysis depends on His378, which acts as the Proton acceptor. CoA-binding positions include Lys461 and 465 to 472; that span reads KRHGMSPD. A (R)-carnitine-binding site is contributed by Tyr494. Ser498 contributes to the CoA binding site. A (R)-carnitine-binding site is contributed by Thr507. A CoA-binding site is contributed by Gln597. Residues 668 to 670 carry the Microbody targeting signal motif; sequence AKL.

It belongs to the carnitine/choline acetyltransferase family.

The protein localises to the mitochondrion inner membrane. It is found in the peroxisome. It carries out the reaction (R)-carnitine + acetyl-CoA = O-acetyl-(R)-carnitine + CoA. In terms of biological role, carnitine acetylase is specific for short chain fatty acids. Carnitine acetylase seems to affect the flux through the pyruvate dehydrogenase complex. It may be involved as well in the transport of acetyl-CoA into mitochondria. This chain is Carnitine O-acetyltransferase, mitochondrial (CAT2), found in Saccharomyces cerevisiae (strain ATCC 204508 / S288c) (Baker's yeast).